Here is a 1050-residue protein sequence, read N- to C-terminus: Probable efflux pump membrane transporter TtgB (1050 aa).

The next 12 helical transmembrane spans lie at 10-30 (IFAW…ILKL), 339-359 (GVIH…YLFL), 370-390 (MTVP…GFSI), 393-413 (LTMF…IVVV), 440-460 (GALV…AFFG), 472-492 (ITIV…TPAL), 539-559 (VPFL…FARI), 871-891 (MPAL…ALYE), 893-913 (WSIP…ALIA), 923-943 (VYFL…AILI), 972-992 (IIMT…ASGA), and 1004-1024 (VIGG…LFFV).

This sequence belongs to the resistance-nodulation-cell division (RND) (TC 2.A.6) family.

The protein resides in the cell inner membrane. Probable membrane transporter component of the TtgABC efflux pump with unknown specificity. The chain is Probable efflux pump membrane transporter TtgB (ttgB) from Pseudomonas putida (strain ATCC 47054 / DSM 6125 / CFBP 8728 / NCIMB 11950 / KT2440).